Consider the following 91-residue polypeptide: Putative septation protein SpoVG (91 aa).

The protein belongs to the SpoVG family.

Its function is as follows. Could be involved in septation. This Caldanaerobacter subterraneus subsp. tengcongensis (strain DSM 15242 / JCM 11007 / NBRC 100824 / MB4) (Thermoanaerobacter tengcongensis) protein is Putative septation protein SpoVG.